The chain runs to 256 residues: Adenosine 5'-phosphosulfate reductase (256 aa).

Positions 120, 121, 203, and 206 each coordinate [4Fe-4S] cluster. The active-site Nucleophile; cysteine thiosulfonate intermediate is C231.

This sequence belongs to the PAPS reductase family. CysH subfamily. The cofactor is [4Fe-4S] cluster.

The protein localises to the cytoplasm. It catalyses the reaction [thioredoxin]-disulfide + sulfite + AMP + 2 H(+) = adenosine 5'-phosphosulfate + [thioredoxin]-dithiol. The protein operates within sulfur metabolism; hydrogen sulfide biosynthesis; sulfite from sulfate. In terms of biological role, catalyzes the formation of sulfite from adenosine 5'-phosphosulfate (APS) using thioredoxin as an electron donor. The protein is Adenosine 5'-phosphosulfate reductase of Allochromatium vinosum (strain ATCC 17899 / DSM 180 / NBRC 103801 / NCIMB 10441 / D) (Chromatium vinosum).